The sequence spans 146 residues: Mitochondrial pyruvate carrier 3 (146 aa).

The N-terminal 20 residues, 1-20 (MSASAFNFAFRRFWNSETGP), are a transit peptide targeting the mitochondrion. 3 helical membrane passes run 23-39 (VHFW…FAGL), 55-71 (LSLL…SFVI), and 78-94 (LASV…YHLT).

This sequence belongs to the mitochondrial pyruvate carrier (MPC) (TC 2.A.105) family. In terms of assembly, the functional 150 kDa pyruvate import complex is a heteromer of MPC1 and either MPC2 or MPC3.

Its subcellular location is the mitochondrion. The protein resides in the mitochondrion inner membrane. Mediates the uptake of pyruvate into mitochondria. This chain is Mitochondrial pyruvate carrier 3, found in Saccharomyces cerevisiae (strain ATCC 204508 / S288c) (Baker's yeast).